The chain runs to 114 residues: U17-barytoxin-Tl1d (114 aa).

Positions 1-20 (MKTIIVFLSLLVLATKFGDA) are cleaved as a signal peptide. Positions 21–74 (NEGVNQEQMKEVIQNEFREDFLNEMAPMSLLQQLEAIESTLLEKEADRNSRQKR) are excised as a propeptide. 3 disulfides stabilise this stretch: Cys-75–Cys-88, Cys-82–Cys-93, and Cys-87–Cys-108.

This sequence belongs to the neurotoxin 14 (magi-1) family. 03 (ICK-30-40) subfamily. As to expression, expressed by the venom gland.

Its subcellular location is the secreted. Functionally, ion channel inhibitor. This Trittame loki (Brush-footed trapdoor spider) protein is U17-barytoxin-Tl1d.